A 287-amino-acid polypeptide reads, in one-letter code: Probable 3-hydroxybutyryl-CoA dehydrogenase (287 aa).

It belongs to the 3-hydroxyacyl-CoA dehydrogenase family.

The catalysed reaction is (3S)-3-hydroxybutanoyl-CoA + NADP(+) = acetoacetyl-CoA + NADPH + H(+). Its pathway is lipid metabolism; butanoate metabolism. The sequence is that of Probable 3-hydroxybutyryl-CoA dehydrogenase (mmgB) from Bacillus subtilis (strain 168).